A 324-amino-acid polypeptide reads, in one-letter code: Phospho-N-acetylmuramoyl-pentapeptide-transferase (324 aa).

The next 10 helical transmembrane spans lie at 9–29 (TFAVAFIITVIGVPLFIPFLV), 53–73 (TMGAVIFITAMLISFLIFSFI), 77–97 (VSAATWLLFITLALFGALGFL), 117–137 (FLGQVAISILFYLVYHFSDFA), 149–169 (IDLGWFFIIFILFWLVGFSNA), 176–196 (LDGLVSGLSVIAFSAFGVIAF), 201–221 (MDVAIFCFAIVGGMLGFLLFN), 227–247 (IFMGDTGSLALGGSIAAVSIL), 253–273 (LLLLIGIIFVIETASVILQVF), and 304–324 (VLTFWGIGLIGAIISVCVVIF).

Belongs to the glycosyltransferase 4 family. MraY subfamily. The cofactor is Mg(2+).

The protein resides in the cell membrane. The enzyme catalyses UDP-N-acetyl-alpha-D-muramoyl-L-alanyl-gamma-D-glutamyl-meso-2,6-diaminopimeloyl-D-alanyl-D-alanine + di-trans,octa-cis-undecaprenyl phosphate = di-trans,octa-cis-undecaprenyl diphospho-N-acetyl-alpha-D-muramoyl-L-alanyl-D-glutamyl-meso-2,6-diaminopimeloyl-D-alanyl-D-alanine + UMP. The protein operates within cell wall biogenesis; peptidoglycan biosynthesis. Catalyzes the initial step of the lipid cycle reactions in the biosynthesis of the cell wall peptidoglycan: transfers peptidoglycan precursor phospho-MurNAc-pentapeptide from UDP-MurNAc-pentapeptide onto the lipid carrier undecaprenyl phosphate, yielding undecaprenyl-pyrophosphoryl-MurNAc-pentapeptide, known as lipid I. The chain is Phospho-N-acetylmuramoyl-pentapeptide-transferase from Listeria innocua serovar 6a (strain ATCC BAA-680 / CLIP 11262).